The chain runs to 710 residues: F-box/WD repeat-containing protein 7 (710 aa).

The tract at residues 1–158 (MNQELLSVGS…CSSVSDLPAH (158 aa)) is disordered. Phosphoserine is present on S26. The segment covering 46-55 (RHQEEEHTAR) has biased composition (basic and acidic residues). Residues 69–84 (QNDTQQGQVEENNNRF) are compositionally biased toward polar residues. The span at 87–132 (VDEDSSGNQEEQEEDEEHAGEQEEEEEEEEEEEEMDQESDDFDPSD) shows a compositional bias: acidic residues. Positions 133 to 142 (DSSREDEHTH) are enriched in basic and acidic residues. The segment covering 143–158 (NSNVTNCSSVSDLPAH) has biased composition (polar residues). T208 carries the post-translational modification Phosphothreonine. Position 230 is a phosphoserine; by SGK1 (S230). The region spanning 281–327 (RDFISLLPKELALYVLSFLEPKDLLQAAQTCRYWRILAEDNLLWREK) is the F-box domain. 7 WD repeats span residues 381-421 (GHDD…RTLV), 423-459 (HTGGVWSSQMRDNIIISGSTDRTLKVWNAETGECIHT), 462-501 (GHTSTVRCMHLHEKRVVSGSRDATLRVWDIETGQCLHVLM), 503-539 (HVAAVRCVQYDGRRVVSGAYDFMVKVWDPETETCLHT), 542-581 (GHTNRVYSLQFDGIHVVSGSLDTSIRVWDVETGNCIHTLT), 583-621 (HQSLTSGMELKDNILVSGNADSTVKIWDIKTGQCLQTLQ), and 625-662 (KHQSAVTCLQFNKNFVITSSDDGTVKLWDLKTGEFIRN).

As to quaternary structure, homodimer; homodimerization plays a role in substrate binding and/or ubiquitination and degradation. Component of the SCF(FBXW7) complex consisting of CUL1, RBX1, SKP1 and FBXW7. Interacts (via F-box domain) with SKP1. Interacts (via F-box domain) with pseudophosphatase STYX; the interaction is direct and prevents FBXW7 interaction with SKP1. Interacts with cyclin-E (CCNE1 or CCNE2). Interacts with PSEN1. Forms a trimeric complex with NOTCH1 and SGK1. Interacts with NOTCH1 intracellular domain/NICD and NOTCH4 intracellular domain/NICD. Interacts with NOTCH2 intracellular domain (N2ICD). Interacts with MYC (when phosphorylated). Interacts with USP28, counteracting ubiquitination of MYC. Interacts (when phosphorylated at Thr-208) with PIN1, disrupting FBXW7 dimerization and promoting FBXW7 autoubiquitination and degradation. Interacts with UBE2QL1. Interacts with FAM83D; promotes FBXW7 degradation. Interacts with MYCN; FBXW7 competes with AURKA for binding to unphosphorylated MYCN but not for binding to phosphorylated MYCN. Interacts with JUN. Found in a complex with JUN and PRR7. Interacts with JUN and PRR7; the interaction inhibits ubiquitination-mediated JUN degradation, promoting its phosphorylation and transcriptional activity. Interacts with NFE2L1. Interacts with NR1D1. Interacts with RICTOR; mediates RICTOR ubiquitination and degradation. Interacts with USP38, counteracting ubiquitination of MYC. In terms of processing, phosphorylation at Thr-208 promotes interaction with PIN1, leading to disrupt FBXW7 dimerization and promoting FBXW7 autoubiquitination and degradation. Phosphorylated by ATM at Ser-26 in response to DNA damage, promoting recruitment to DNA damage sites and 'Lys-63'-linked ubiquitination of phosphorylated XRCC4. Post-translationally, ubiquitinated: autoubiquitinates following phosphorylation at Thr-208 and subsequent interaction with PIN1. Ubiquitination leads to its proteasomal degradation. In terms of tissue distribution, widely expressed with highest levels in brain, heart and testis.

It localises to the nucleus. The protein resides in the nucleoplasm. Its subcellular location is the chromosome. Its pathway is protein modification; protein ubiquitination. In terms of biological role, substrate recognition component of a SCF (SKP1-CUL1-F-box protein) E3 ubiquitin-protein ligase complex which mediates the ubiquitination and subsequent proteasomal degradation of target proteins. Recognizes and binds phosphorylated sites/phosphodegrons within target proteins and thereafter brings them to the SCF complex for ubiquitination. Mediates ubiquitination and subsequent degradation of CCNE1 and MYC. Identified substrates include cyclin-E (CCNE1 or CCNE2), DISC1, JUN, MYC, NOTCH1 released notch intracellular domain (NICD), NOTCH2, MCL1, MLST8, RICTOR and probably PSEN1. Acts as a negative regulator of JNK signaling by binding to phosphorylated JUN and promoting its ubiquitination and subsequent degradation. SCF(FBXW7) complex mediates the ubiquitination and subsequent degradation of NFE2L1. Involved in bone homeostasis and negative regulation of osteoclast differentiation. Regulates the amplitude of the cyclic expression of hepatic core clock genes and genes involved in lipid and glucose metabolism via ubiquitination and proteasomal degradation of their transcriptional repressor NR1D1; CDK1-dependent phosphorylation of NR1D1 is necessary for SCF(FBXW7)-mediated ubiquitination. Also able to promote 'Lys-63'-linked ubiquitination in response to DNA damage. The SCF(FBXW7) complex facilitates double-strand break repair following phosphorylation by ATM: phosphorylation promotes localization to sites of double-strand breaks and 'Lys-63'-linked ubiquitination of phosphorylated XRCC4, enhancing DNA non-homologous end joining. This is F-box/WD repeat-containing protein 7 from Mus musculus (Mouse).